The primary structure comprises 455 residues: Dihydrolipoyllysine-residue succinyltransferase component of 2-oxoglutarate dehydrogenase complex, mitochondrial (455 aa).

Residues 1 to 68 constitute a mitochondrion transit peptide; that stretch reads MLSRSRCASR…RFFRTTAVCK (68 aa). One can recognise a Lipoyl-binding domain in the interval 71–145; the sequence is VITVKTPAFA…EGGTPLFTLR (75 aa). Serine 82 is subject to Phosphoserine. At lysine 111 the chain carries N6-lipoyllysine. The residue at position 155 (lysine 155) is an N6-acetyllysine. Positions 155–173 are enriched in low complexity; it reads KPAAAPAAAAPKAEPTVSA. Residues 155–220 form a disordered region; that stretch reads KPAAAPAAAA…PRAEAGAGVG (66 aa). The span at 174–193 shows a compositional bias: pro residues; it reads VPPPPAAPIPTQMPPVPSPS. Lysine 269, lysine 274, lysine 275, lysine 279, and lysine 309 each carry N6-acetyllysine. Active-site residues include histidine 426 and aspartate 430.

It belongs to the 2-oxoacid dehydrogenase family. As to quaternary structure, the 2-oxoglutarate dehydrogenase complex is composed of OGDH (2-oxoglutarate dehydrogenase; E1), DLST (dihydrolipoamide succinyltransferase; E2), DLD (dihydrolipoamide dehydrogenase; E3) and the assembly factor KGD4. It contains multiple copies of the three enzymatic components (E1, E2 and E3). In the nucleus, the 2-oxoglutarate dehydrogenase complex associates with KAT2A. Interacts with ABHD11; this interaction maintains the functional lipoylation of the 2-oxoglutarate dehydrogenase complex. (R)-lipoate serves as cofactor.

It localises to the mitochondrion matrix. The protein resides in the nucleus. It carries out the reaction N(6)-[(R)-dihydrolipoyl]-L-lysyl-[protein] + succinyl-CoA = N(6)-[(R)-S(8)-succinyldihydrolipoyl]-L-lysyl-[protein] + CoA. It functions in the pathway amino-acid degradation; L-lysine degradation via saccharopine pathway; glutaryl-CoA from L-lysine: step 6/6. The protein operates within carbohydrate metabolism; tricarboxylic acid cycle. Functionally, dihydrolipoamide succinyltransferase (E2) component of the 2-oxoglutarate dehydrogenase complex. The 2-oxoglutarate dehydrogenase complex catalyzes the overall conversion of 2-oxoglutarate to succinyl-CoA and CO(2). The 2-oxoglutarate dehydrogenase complex is mainly active in the mitochondrion. A fraction of the 2-oxoglutarate dehydrogenase complex also localizes in the nucleus and is required for lysine succinylation of histones: associates with KAT2A on chromatin and provides succinyl-CoA to histone succinyltransferase KAT2A. This chain is Dihydrolipoyllysine-residue succinyltransferase component of 2-oxoglutarate dehydrogenase complex, mitochondrial, found in Bos taurus (Bovine).